The primary structure comprises 82 residues: Small ribosomal subunit protein uS17 (82 aa).

Belongs to the universal ribosomal protein uS17 family. In terms of assembly, part of the 30S ribosomal subunit.

In terms of biological role, one of the primary rRNA binding proteins, it binds specifically to the 5'-end of 16S ribosomal RNA. This chain is Small ribosomal subunit protein uS17, found in Shewanella piezotolerans (strain WP3 / JCM 13877).